The sequence spans 725 residues: Rab-like protein 6 (725 aa).

The residue at position 1 (Met1) is an N-acetylmethionine. The interval 39–279 (GVQYNMKIVI…IFLEMMEARS (241 aa)) is small GTPase-like. Residues 50-57 (GDRNTGKT), 100-104 (DVVDK), and 177-179 (YRD) contribute to the GTP site. Disordered stretches follow at residues 281–364 (GHAS…PAPA) and 378–725 (PAAE…YEEL). Low complexity-rich tracts occupy residues 291 to 325 (QSPSSGSQSPVVPPSAVSTGSSSPSTPQPAPQLSL) and 343 to 353 (AMPSSVHSSAP). Positions 410–427 (GLDRSFLEDTSVPKDKKV) are enriched in basic and acidic residues. Phosphoserine is present on residues Ser414, Ser436, Ser438, Ser480, Ser482, Ser483, and Ser502. Positions 499–514 (QQCSEPETKWSSTKVS) are enriched in polar residues. Residues 537-549 (DSERPQEGKDKQV) show a composition bias toward basic and acidic residues. Residues 569 to 578 (DDPDFESDES) are compositionally biased toward acidic residues. Residues Ser575 and Ser594 each carry the phosphoserine modification. Thr597 is subject to Phosphothreonine. Residues 632–649 (MGPKESSDEDRDSKLPSK) are compositionally biased toward basic and acidic residues. 3 positions are modified to phosphoserine: Ser637, Ser638, and Ser644. The segment at 652–690 (KKKKKKSKEEEEKTTKKKSKHKKSKDKEEGKEDRKKKRK) is interaction with CDKN2A. The segment covering 666–675 (TKKKSKHKKS) has biased composition (basic residues). Positions 707 to 725 (LGGGAPGSRHPGGGDYEEL) are enriched in gly residues.

Belongs to the small GTPase superfamily. Rab family.

The protein localises to the nucleus. It localises to the cytoplasm. Functionally, may enhance cellular proliferation. May reduce growth inhibitory activity of CDKN2A. The chain is Rab-like protein 6 (Rabl6) from Mus musculus (Mouse).